The chain runs to 142 residues: Putative nickel-responsive regulator (142 aa).

His77, His88, His90, and Cys96 together coordinate Ni(2+).

Belongs to the transcriptional regulatory CopG/NikR family. As to quaternary structure, homotetramer. Ni(2+) is required as a cofactor.

Functionally, transcriptional regulator. The sequence is that of Putative nickel-responsive regulator from Halobacterium salinarum (strain ATCC 700922 / JCM 11081 / NRC-1) (Halobacterium halobium).